A 404-amino-acid polypeptide reads, in one-letter code: Glutamate-pyruvate aminotransferase AlaA (404 aa).

L-alanine-binding residues include G41 and N179. K240 is modified (N6-(pyridoxal phosphate)lysine). R378 serves as a coordination point for L-alanine.

It belongs to the class-I pyridoxal-phosphate-dependent aminotransferase family. As to quaternary structure, homodimer. Requires pyridoxal 5'-phosphate as cofactor.

The catalysed reaction is L-alanine + 2-oxoglutarate = pyruvate + L-glutamate. Its pathway is amino-acid biosynthesis; L-alanine biosynthesis. Involved in the biosynthesis of alanine. Catalyzes the transamination of pyruvate by glutamate, leading to the formation of L-alanine and 2-oxoglutarate. Is also able to catalyze the reverse reaction. The chain is Glutamate-pyruvate aminotransferase AlaA (alaA) from Haemophilus influenzae (strain ATCC 51907 / DSM 11121 / KW20 / Rd).